A 552-amino-acid chain; its full sequence is Chaperonin GroEL 1 (552 aa).

ATP is bound by residues 30–33, lysine 51, 87–91, glycine 415, 479–481, and aspartate 495; these read TLGP, DGTTT, and NAA.

Belongs to the chaperonin (HSP60) family. In terms of assembly, forms a cylinder of 14 subunits composed of two heptameric rings stacked back-to-back. Interacts with the co-chaperonin GroES.

It is found in the cytoplasm. The enzyme catalyses ATP + H2O + a folded polypeptide = ADP + phosphate + an unfolded polypeptide.. Its function is as follows. Together with its co-chaperonin GroES, plays an essential role in assisting protein folding. The GroEL-GroES system forms a nano-cage that allows encapsulation of the non-native substrate proteins and provides a physical environment optimized to promote and accelerate protein folding. The chain is Chaperonin GroEL 1 from Albidiferax ferrireducens (strain ATCC BAA-621 / DSM 15236 / T118) (Rhodoferax ferrireducens).